Here is a 160-residue protein sequence, read N- to C-terminus: Cytochrome b6-f complex subunit 4 (160 aa).

3 helical membrane-spanning segments follow: residues 36 to 56 (LLYIPPVVIPGTIACTVGLAV), 95 to 115 (LLGVLLMAAVPAGLLVVPFPE), and 131 to 151 (TVFSAGTAVAPWLGIGAALPI).

Belongs to the cytochrome b family. PetD subfamily. In terms of assembly, the 4 large subunits of the cytochrome b6-f complex are cytochrome b6, subunit IV (17 kDa polypeptide, petD), cytochrome f and the Rieske protein, while the 4 small subunits are petG, petL, petM and petN. The complex functions as a dimer.

It is found in the plastid. The protein localises to the chloroplast thylakoid membrane. Functionally, component of the cytochrome b6-f complex, which mediates electron transfer between photosystem II (PSII) and photosystem I (PSI), cyclic electron flow around PSI, and state transitions. The polypeptide is Cytochrome b6-f complex subunit 4 (Huperzia lucidula (Shining clubmoss)).